The following is a 1774-amino-acid chain: Collagen alpha-1(XVIII) chain (1774 aa).

Positions 1–26 (MAPDPSRRLCLLLLLLLSCRLVPASA) are cleaved as a signal peptide. The nonhelical region 1 (NC1) stretch occupies residues 27–785 (DGNSLSPLNP…QNPGRGLIKG (759 aa)). Disordered stretches follow at residues 47–113 (DSLE…TPAV) and 218–269 (LPPF…LEGK). 2 stretches are compositionally biased toward polar residues: residues 55–87 (KPQN…TPAS) and 244–256 (LSSS…SWGN). N-linked (GlcNAc...) asparagine glycans are attached at residues N354 and N361. An FZ domain is found at 365-482 (TSTSRCLPLP…SQEDGYCVFI (118 aa)). Cystine bridges form between C370–C433, C380–C426, C417–C455, C444–C479, and C448–C468. One can recognise a Laminin G-like domain in the interval 522 to 704 (GPDSNSGQVA…EDRASGDFGS (183 aa)). N585 is a glycosylation site (N-linked (GlcNAc...) asparagine). The disordered stretch occupies residues 681 to 1458 (RVSPVHCLDE…PPGPPGAMGA (778 aa)). Basic and acidic residues predominate over residues 708 to 717 (ESSKSHKEDT). The residue at position 730 (T730) is a Phosphothreonine. The segment at 786–812 (GMKGQKGEPGAQGPPGPAGPQGPAGPV) is triple-helical region 1 (COL1). A compositionally biased stretch (low complexity) spans 809-824 (AGPVVQSPNSQPVPGA). The tract at residues 813-822 (VQSPNSQPVP) is nonhelical region 2 (NC2). The region spanning 823 to 878 (GAQGPPGPQGPPGKDGTPGRDGEPGDPGEDGRPGDTGPQGFPGTPGDVGPKGEKGD) is the Collagen-like 1 domain. Residues 823-896 (GAQGPPGPQG…PGPPGPPGPS (74 aa)) are triple-helical region 2 (COL2). The segment covering 839 to 855 (TPGRDGEPGDPGEDGRP) has biased composition (basic and acidic residues). Residues 884-895 (RGPPGPPGPPGP) are compositionally biased toward pro residues. Residues 897–920 (FRQDKLTFIDMEGSGFSGDIESLR) are nonhelical region 3 (NC3). The O-linked (Xyl...) (chondroitin sulfate) serine glycan is linked to S910. Residues 921-1042 (GPRGFPGPPG…PGPPGPPGPG (122 aa)) are triple-helical region 3 (COL3). The segment covering 925-935 (FPGPPGPPGVP) has biased composition (pro residues). A glycan (N-linked (GlcNAc...) asparagine) is linked at N947. The span at 951-963 (APGPAGLPGVPGK) shows a compositional bias: low complexity. Collagen-like domains are found at residues 953–1007 (GPAG…GSKG) and 1008–1041 (DLGP…PPGP). Composition is skewed to pro residues over residues 967-982 (PGFP…PGKE) and 1026-1041 (PVGP…PPGP). The nonhelical region 4 (NC4) stretch occupies residues 1043–1065 (FAAGFDDMEGSGIPLWTTARSSD). Collagen-like domains are found at residues 1066–1117 (GLQG…GPKG), 1118–1147 (EKGM…PPGP), 1162–1202 (PGPE…GEPG), and 1216–1264 (QKGA…EPGD). A triple-helical region 4 (COL4) region spans residues 1066-1148 (GLQGPPGSPG…PGPPGPPGPV (83 aa)). Positions 1138-1147 (LPGPPGPPGP) are enriched in pro residues. Residues 1149–1162 (IYVSSEDKAIVSTP) form a nonhelical region 5 (NC5) region. A triple-helical region 5 (COL5) region spans residues 1163-1204 (GPEGKPGYAGFPGPAGPKGDLGSKGEQGLPGPKGEKGEPGTI). Positions 1205–1217 (FSPDGRALGHPQK) are nonhelical region 6 (NC6). The interval 1218 to 1290 (GAKGEPGFRG…PGPPGPPGMP (73 aa)) is triple-helical region 6 (COL6). Pro residues predominate over residues 1275-1289 (PGPPGPPGPPGPPGM). Residues 1291 to 1300 (IYDSNAFVES) form a nonhelical region 7 (NC7) region. Residues 1301–1317 (GRPGLPGQQGVQGPSGP) are compositionally biased toward low complexity. Positions 1301–1333 (GRPGLPGQQGVQGPSGPKGDKGEVGPPGPPGQF) are triple-helical region 7 (COL7). The interval 1334-1345 (PIDLFHLEAEMK) is nonhelical region 8 (NC8). Residues 1338-1362 (FHLEAEMKGDKGDRGDAGQKGERGE) are compositionally biased toward basic and acidic residues. A triple-helical region 8 (COL8) region spans residues 1346–1369 (GDKGDRGDAGQKGERGEPGAPGGG). Positions 1351–1353 (RGD) match the Cell attachment site motif. Residues 1370-1376 (FFSSSVP) are nonhelical region 9 (NC9). Composition is skewed to pro residues over residues 1376–1388 (PGPP…PGIP), 1398–1407 (PPGPPGPQGP), 1418–1431 (PPGP…PSFP), and 1441–1453 (PGPP…PGPP). Residues 1377–1428 (GPPGPPGYPGIPGPKGESIRGPPGPPGPQGPPGIGYEGRQGPPGPPGPPGPP) are triple-helical region 9 (COL9). The nonhelical region 10 (NC10) stretch occupies residues 1429–1441 (SFPGPHRQTVSVP). Residues 1442-1459 (GPPGPPGPPGPPGAMGAS) are triple-helical region 10 (COL10). Residues 1460–1774 (AGQVRIWATY…ENSFMTSFSK (315 aa)) form a nonhelical region 11 (NC11) region. The segment at 1474–1519 (DKIREVPEGWLIFVAEREELYVRVRNGFRKVLLEARTALPRGTGNE) is non-collagenous domain 1 association domain. A non-collagenous domain 1 hinge region region spans residues 1520–1590 (VAALQPPLVQ…PPARPTLSLA (71 aa)). 5 residues coordinate Zn(2+): H1591, H1593, D1595, H1601, and D1666. Disulfide bonds link C1623/C1763 and C1725/C1755.

This sequence belongs to the multiplexin collagen family. As to quaternary structure, forms homotrimers. Recombinant non-collagenous domain 1 has stronger affinity to NID1, HSPG2 and laminin-1:NID1 complex and lower affinity to FBLN1 and FBLN2 than endostatin. In terms of assembly, monomeric. Interacts with KDR/VEGFR2. Interacts with the ITGA5:ITGB1 complex. Interacts with NID1, HSPG2, laminin-1:NID1 complex, FBLN1 and FBLN2. Prolines at the third position of the tripeptide repeating unit (G-X-Y) of the triple-helical regions are hydroxylated. In terms of processing, undergoes proteolytic processing by CTSL/cathepsin-L and elastase-like proteases to generate both non-collagenous domain 1 trimers and endostatin monomers. In tissue extracts (brain, skeletal muscle, heart, kidney, testis and liver) predominantly bands of approximately 38 kDa are detected; recombinant non-collagenous domain 1 shows similar mobility. In vitro, several proteolytic cleavage sites in the non-collagenous domain 1 hinge region generating different endostatin-like peptides are reported. Expressed in liver, kidney, lung, skeletal muscle and testis.

Its subcellular location is the secreted. The protein resides in the extracellular space. The protein localises to the extracellular matrix. It is found in the basement membrane. In terms of biological role, probably plays a major role in determining the retinal structure as well as in the closure of the neural tube. May regulate extracellular matrix-dependent motility and morphogenesis of endothelial and non-endothelial cells; the function requires homotrimerization and implicates MAPK signaling. Its function is as follows. Potently inhibits endothelial cell proliferation and angiogenesis. May inhibit angiogenesis by binding to the heparan sulfate proteoglycans involved in growth factor signaling. Inhibits VEGFA isoform VEGF165-induced endothelial cell proliferation and migration. Seems to inhibit VEGFA-mediated signaling by blocking the interaction of VEGFA to its receptor KDR/VEGFR2. Modulates endothelial cell migration in an integrin-dependent manner implicating integrin ITGA5:ITGB1 and to a lesser extent ITGAV:ITGB3 and ITGAV:ITGB5. May negatively regulate the activity of homotrimeric non-collagenous domain 1. The sequence is that of Collagen alpha-1(XVIII) chain from Mus musculus (Mouse).